The following is a 293-amino-acid chain: Probable chromosome 2-partitioning protein ParB (293 aa).

This sequence belongs to the ParB family.

Functionally, involved in chromosome partition. Localize to both poles of the predivisional cell following completion of DNA replication. Binds to the DNA origin of replication. The protein is Probable chromosome 2-partitioning protein ParB (parB2) of Deinococcus radiodurans (strain ATCC 13939 / DSM 20539 / JCM 16871 / CCUG 27074 / LMG 4051 / NBRC 15346 / NCIMB 9279 / VKM B-1422 / R1).